A 117-amino-acid chain; its full sequence is NADPH-dependent 7-cyano-7-deazaguanine reductase (117 aa).

C31 serves as the catalytic Thioimide intermediate. D38 serves as the catalytic Proton donor. Residues 53–55 (IEL) and 72–73 (YE) each bind substrate.

It belongs to the GTP cyclohydrolase I family. QueF type 1 subfamily.

The protein resides in the cytoplasm. The enzyme catalyses 7-aminomethyl-7-carbaguanine + 2 NADP(+) = 7-cyano-7-deazaguanine + 2 NADPH + 3 H(+). Its pathway is tRNA modification; tRNA-queuosine biosynthesis. In terms of biological role, catalyzes the NADPH-dependent reduction of 7-cyano-7-deazaguanine (preQ0) to 7-aminomethyl-7-deazaguanine (preQ1). The protein is NADPH-dependent 7-cyano-7-deazaguanine reductase of Chlorobaculum tepidum (strain ATCC 49652 / DSM 12025 / NBRC 103806 / TLS) (Chlorobium tepidum).